A 39-amino-acid chain; its full sequence is Photosystem II reaction center protein J (39 aa).

A helical membrane pass occupies residues 7-27; the sequence is IPLWLVATVAGMGVITLLGIF.

It belongs to the PsbJ family. In terms of assembly, PSII is composed of 1 copy each of membrane proteins PsbA, PsbB, PsbC, PsbD, PsbE, PsbF, PsbH, PsbI, PsbJ, PsbK, PsbL, PsbM, PsbT, PsbX, PsbY, PsbZ, Psb30/Ycf12, peripheral proteins PsbO, CyanoQ (PsbQ), PsbU, PsbV and a large number of cofactors. It forms dimeric complexes.

The protein localises to the cellular thylakoid membrane. One of the components of the core complex of photosystem II (PSII). PSII is a light-driven water:plastoquinone oxidoreductase that uses light energy to abstract electrons from H(2)O, generating O(2) and a proton gradient subsequently used for ATP formation. It consists of a core antenna complex that captures photons, and an electron transfer chain that converts photonic excitation into a charge separation. The sequence is that of Photosystem II reaction center protein J from Cyanothece sp. (strain PCC 7425 / ATCC 29141).